Consider the following 1020-residue polypeptide: Protein translocase subunit SecA (1020 aa).

ATP is bound by residues glutamine 143, 161 to 165, and aspartate 661; that span reads GEGKT. The segment at 974–1020 is disordered; it reads SVYNASPGAENEAPLQRPVTADSKPGRNDPCPCGSGKKYKNCHGQQP. Zn(2+)-binding residues include cysteine 1004, cysteine 1006, cysteine 1015, and histidine 1016.

It belongs to the SecA family. In terms of assembly, monomer and homodimer. Part of the essential Sec protein translocation apparatus which comprises SecA, SecYEG and auxiliary proteins SecDF. Other proteins may also be involved. The cofactor is Zn(2+).

The protein localises to the cell inner membrane. It is found in the cytoplasm. It catalyses the reaction ATP + H2O + cellular proteinSide 1 = ADP + phosphate + cellular proteinSide 2.. Part of the Sec protein translocase complex. Interacts with the SecYEG preprotein conducting channel. Has a central role in coupling the hydrolysis of ATP to the transfer of proteins into and across the cell membrane, serving as an ATP-driven molecular motor driving the stepwise translocation of polypeptide chains across the membrane. This Chlorobium phaeovibrioides (strain DSM 265 / 1930) (Prosthecochloris vibrioformis (strain DSM 265)) protein is Protein translocase subunit SecA.